The chain runs to 237 residues: UPF0173 metal-dependent hydrolase BruAb2_0628 (237 aa).

This sequence belongs to the UPF0173 family.

This Brucella abortus biovar 1 (strain 9-941) protein is UPF0173 metal-dependent hydrolase BruAb2_0628.